The sequence spans 274 residues: Envelope glycoprotein L (274 aa).

The signal sequence occupies residues 1 to 21; the sequence is MMPLLLLILLSTRNLLGAAQS. The region spanning 51 to 251 is the gL betaherpesvirus-type domain; the sequence is VEHKCREALA…RSYRDRFPAV (201 aa). A disulfide bridge connects residues C156 and C161.

Belongs to the herpesviridae glycoprotein L (gL) family. Betaherpesvirinae gL subfamily. In terms of assembly, interacts with glycoprotein H (gH); this interaction is necessary for the correct processing and cell surface expression of gH.

The protein localises to the virion membrane. It localises to the host cell membrane. It is found in the host Golgi apparatus. The protein resides in the host trans-Golgi network. The heterodimer glycoprotein H-glycoprotein L is required for the fusion of viral and plasma membranes leading to virus entry into the host cell. Acts as a functional inhibitor of gH and maintains gH in an inhibited form. Upon binding to host integrins, gL dissociates from gH leading to activation of the viral fusion glycoproteins gB and gH. The sequence is that of Envelope glycoprotein L from Murid herpesvirus 1 (strain Smith) (MuHV-1).